The sequence spans 669 residues: Beta-galactosidase (669 aa).

The N-terminal stretch at 1-24 is a signal peptide; the sequence is MDFPGAARLLSLLLVPLLLGPARG. Positions 25 to 29 are excised as a propeptide; it reads LRNAS. Asn-27 carries N-linked (GlcNAc...) asparagine glycosylation. Tyr-84, Glu-130, and Asn-188 together coordinate substrate. Catalysis depends on Glu-189, which acts as the Proton donor. A disulfide bridge connects residues Cys-196 and Cys-231. N-linked (GlcNAc...) asparagine glycosylation is present at Asn-248. The Nucleophile role is filled by Glu-269. A substrate-binding site is contributed by Tyr-334. 4 N-linked (GlcNAc...) asparagine glycosylation sites follow: Asn-465, Asn-499, Asn-547, and Asn-557. Cys-628 and Cys-636 are disulfide-bonded. The interval 649 to 669 is disordered; that stretch reads TPTSSHPLPDLSDRDSGWDRV. Residues 659 to 669 show a composition bias toward basic and acidic residues; that stretch reads LSDRDSGWDRV.

Belongs to the glycosyl hydrolase 35 family. As to quaternary structure, homodimer. May form higher multimers.

The protein resides in the lysosome. The catalysed reaction is Hydrolysis of terminal non-reducing beta-D-galactose residues in beta-D-galactosides.. Functionally, cleaves beta-linked terminal galactosyl residues from gangliosides, glycoproteins, and glycosaminoglycans. The sequence is that of Beta-galactosidase (GLB1) from Felis catus (Cat).